The chain runs to 89 residues: UPF0147 protein YN1551_1489 (89 aa).

This sequence belongs to the UPF0147 family.

This is UPF0147 protein YN1551_1489 from Saccharolobus islandicus (strain Y.N.15.51 / Yellowstone #2) (Sulfolobus islandicus).